The sequence spans 129 residues: D-ribose pyranase (129 aa).

Residue H20 is the Proton donor of the active site. Substrate-binding positions include D28, H96, and 118–120 (YAN).

It belongs to the RbsD / FucU family. RbsD subfamily. In terms of assembly, homodecamer.

It is found in the cytoplasm. It catalyses the reaction beta-D-ribopyranose = beta-D-ribofuranose. It participates in carbohydrate metabolism; D-ribose degradation; D-ribose 5-phosphate from beta-D-ribopyranose: step 1/2. Functionally, catalyzes the interconversion of beta-pyran and beta-furan forms of D-ribose. The polypeptide is D-ribose pyranase (Staphylococcus haemolyticus (strain JCSC1435)).